Consider the following 384-residue polypeptide: Deoxyguanosinetriphosphate triphosphohydrolase-like protein (384 aa).

A disordered region spans residues 12 to 39; the sequence is ELASYASDPSKTRGRRHSEPPPENRTEF. Residues 28–39 are compositionally biased toward basic and acidic residues; that stretch reads HSEPPPENRTEF. Residues 73-208 form the HD domain; the sequence is RLTHSLEVAQ…ANLADEVAYN (136 aa).

Belongs to the dGTPase family. Type 2 subfamily.

This is Deoxyguanosinetriphosphate triphosphohydrolase-like protein from Bordetella parapertussis (strain 12822 / ATCC BAA-587 / NCTC 13253).